Reading from the N-terminus, the 107-residue chain is Large ribosomal subunit protein P1 (107 aa).

The segment covering 67 to 82 has biased composition (low complexity); that stretch reads GPASAAPAGAAGAAAP. The segment at 67–107 is disordered; sequence GPASAAPAGAAGAAAPAEEKAEEKEEEKEESDEDMGFGLFD. Residues 90-101 show a composition bias toward acidic residues; the sequence is KEEEKEESDEDM.

It belongs to the eukaryotic ribosomal protein P1/P2 family. P1 and P2 exist as dimers at the large ribosomal subunit.

The protein localises to the cytoplasm. Plays an important role in the elongation step of protein synthesis. The sequence is that of Large ribosomal subunit protein P1 from Penicillium crustosum (Blue mold fungus).